The primary structure comprises 413 residues: Hibernation-specific plasma protein HP-55 (413 aa).

Positions 1 to 24 are cleaved as a signal peptide; that stretch reads MPSSISWGLLLLAALSCLGPGSLA. Gln25 carries the pyrrolidone carboxylic acid modification. Residues Asn65, Asn102, Asn165, and Asn266 are each glycosylated (N-linked (GlcNAc...) asparagine). Residues 368-387 form an RCL region; sequence GGTVLGAEAMLQAPIMKFDR.

The protein belongs to the serpin family. In terms of assembly, plasma proteins HP-20, HP-25, HP-27 and HP-55 form a 140 kDa complex via disulfide bonds in the plasma. Post-translationally, the N-terminus is blocked. Plasma; synthesized in the liver.

It is found in the secreted. Protease inhibitor. The polypeptide is Hibernation-specific plasma protein HP-55 (Tamias sibiricus (Siberian chipmunk)).